The primary structure comprises 1087 residues: Ubiquitin-associated protein 2-like (1087 aa).

Position 1 is an N-acetylmethionine (Met-1). The tract at residues 1-33 is disordered; the sequence is MMTSVGTNRARGNWEQPQNQNQTQHKQRPQATA. The UBA domain maps to 49–89; sequence DFEEKVKQLIDITGKNQDECVIALHDCNGDVNRAINVLLEG. Residues 92–234 are disordered; it reads DTHSWEMVGK…TGHFEPDDGT (143 aa). Residues 118–132 are compositionally biased toward basic and acidic residues; that stretch reads EEGKENRDRDRDYSR. A compositionally biased stretch (basic residues) spans 133 to 145; sequence RRGGPPRRGRGAS. 2 positions are modified to asymmetric dimethylarginine: Arg-187 and Arg-190. The segment covering 213–226 has biased composition (low complexity); the sequence is NYGNSSGNTWNNTG. Ser-356 and Ser-360 each carry phosphoserine. Positions 377 to 389 are enriched in low complexity; it reads AQHSQSGSTTTSS. A disordered region spans residues 377 to 420; it reads AQHSQSGSTTTSSWDMGSTTQSPSLVQYDLKNPSDSAVHSPFTK. The span at 390–401 shows a compositional bias: polar residues; sequence WDMGSTTQSPSL. Residues Ser-410 and Ser-416 each carry the phosphoserine modification. Thr-425 bears the Phosphothreonine mark. Residues Ser-439, Ser-454, Ser-467, Ser-470, Ser-471, and Ser-477 each carry the phosphoserine modification. 3 disordered regions span residues 440–493, 530–656, and 669–794; these read PAVA…KKAS, SDYE…IPPL, and TNQH…LPPG. 2 stretches are compositionally biased toward low complexity: residues 474-485 and 534-569; these read QSSSPQPAQQKL and STPT…SQES. A compositionally biased stretch (polar residues) spans 570 to 656; the sequence is GYQSGPIQST…SPSTSSIPPL (87 aa). 4 positions are modified to phosphoserine: Ser-604, Ser-605, Ser-608, and Ser-609. A compositionally biased stretch (low complexity) spans 688–784; that stretch reads TTTTQHSSTL…STRSSVATTS (97 aa). A phosphoserine mark is found at Ser-852 and Ser-859. The disordered stretch occupies residues 865-901; it reads FGRGDASSPAPATTLAQPQQNQTQTHHTTQQTFLNPA. Over residues 873-896 the composition is skewed to low complexity; that stretch reads PAPATTLAQPQQNQTQTHHTTQQT. An omega-N-methylarginine mark is found at Ser-962 and Val-969. Val-969 and Thr-976 each carry N6-acetyllysine. Positions 1040–1087 are disordered; that stretch reads QQPHSQILHHHLQQDGQTGSGQRSQTSSIPQKPQTNKSAYNSYSWGAN. Residues 1053–1067 show a composition bias toward low complexity; it reads QDGQTGSGQRSQTSS. Polar residues predominate over residues 1068 to 1087; that stretch reads IPQKPQTNKSAYNSYSWGAN.

Interacts with BMI1. Part of a complex consisting of UBAP2L, BMI1 and RNF2. Interacts with G3BP1 (via NTF2 domain); promoting stress granule formation. Acetylated. As to expression, ubiquitous.

The protein localises to the nucleus. Its subcellular location is the chromosome. It localises to the cytoplasm. The protein resides in the stress granule. Functionally, recruits the ubiquitination machinery to RNA polymerase II for polyubiquitination, removal and degradation, when the transcription-coupled nucleotide excision repair (TC-NER) machinery fails to resolve DNA damage. Plays an important role in the activity of long-term repopulating hematopoietic stem cells (LT-HSCs). Is a regulator of stress granule assembly, required for their efficient formation. Required for proper brain development and neocortex lamination. This Homo sapiens (Human) protein is Ubiquitin-associated protein 2-like.